The primary structure comprises 282 residues: Aquaporin PIP-type (282 aa).

The next 2 helical transmembrane spans lie at W39–I61 and G74–I96. The NPA 1 signature appears at N102 to A104. Transmembrane regions (helical) follow at residues S116–V138, G159–F181, L201–N223, and H243–L265. The NPA 2 signature appears at N223–A225.

It belongs to the MIP/aquaporin (TC 1.A.8) family. PIP (TC 1.A.8.11) subfamily.

The protein resides in the membrane. In terms of biological role, water-specific channel. This chain is Aquaporin PIP-type, found in Atriplex canescens (Fourwing saltbush).